The following is a 157-amino-acid chain: S-ribosylhomocysteine lyase (157 aa).

Residues His54, His58, and Cys126 each coordinate Fe cation.

It belongs to the LuxS family. Homodimer. Fe cation serves as cofactor.

It catalyses the reaction S-(5-deoxy-D-ribos-5-yl)-L-homocysteine = (S)-4,5-dihydroxypentane-2,3-dione + L-homocysteine. Functionally, involved in the synthesis of autoinducer 2 (AI-2) which is secreted by bacteria and is used to communicate both the cell density and the metabolic potential of the environment. The regulation of gene expression in response to changes in cell density is called quorum sensing. Catalyzes the transformation of S-ribosylhomocysteine (RHC) to homocysteine (HC) and 4,5-dihydroxy-2,3-pentadione (DPD). In Bacillus licheniformis (strain ATCC 14580 / DSM 13 / JCM 2505 / CCUG 7422 / NBRC 12200 / NCIMB 9375 / NCTC 10341 / NRRL NRS-1264 / Gibson 46), this protein is S-ribosylhomocysteine lyase.